Here is a 374-residue protein sequence, read N- to C-terminus: Double homeobox protein 4C (374 aa).

Positions 1–10 (MALPTPSDST) are enriched in polar residues. Disordered stretches follow at residues 1–24 (MALPTPSDSTLPAEARGRGRRRRL), 72–102 (SRQLRQHRRESRPWPGRRGPPEGRRKRTAVT), and 218–374 (LQPS…YELL). DNA-binding regions (homeobox) lie at residues 19-78 (GRRR…LRQH) and 94-153 (GRRK…PGQG). A compositionally biased stretch (basic and acidic residues) spans 265–274 (KSREDRDPQR). 2 stretches are compositionally biased toward low complexity: residues 278–302 (PGPCAVAQPGPAQAGPQGQGVLAPP) and 319–329 (AGAAWEPQAGA). Over residues 354-374 (QPLQEPGRSSTVTSSLLYELL) the composition is skewed to polar residues.

As to quaternary structure, may interact with MYF5; regulates MYF5 expression. In terms of tissue distribution, expressed in muscles, as well as in primary myoblasts and myotubes (at protein level).

It localises to the nucleus. The protein resides in the cytoplasm. Its function is as follows. Down-regulates MYOD1 expression and may up-regulate MYF5 expression. May regulate microRNA (miRNA) transcription, up-regulating the expression of some myogenic miRNAs, including MIR1-1, MIR133A2, MIR133B and MIR206. Impairs the differentiation of myoblasts and may be involved in muscle regeneration. Reduces DUX4-induced nuclear localization of CTNNB1/beta-catenin and its subsequent activation of target genes. The polypeptide is Double homeobox protein 4C (DUX4L9) (Homo sapiens (Human)).